The primary structure comprises 1048 residues: uncharacterized protein (1048 aa).

A disordered region spans residues 601–629 (ENQINEEQQTNVENEQQTEQQFENEDKET). The span at 605–621 (NEEQQTNVENEQQTEQQ) shows a compositional bias: low complexity.

This is an uncharacterized protein from Methanocaldococcus jannaschii (strain ATCC 43067 / DSM 2661 / JAL-1 / JCM 10045 / NBRC 100440) (Methanococcus jannaschii).